The chain runs to 199 residues: Pathogenesis-related 5 protein Cup a 3 (199 aa).

Cystine bridges form between C9–C198, C50–C60, C65–C71, C113–C187, C118–C171, C126–C136, C140–C149, and C150–C158.

It belongs to the thaumatin family. Expressed in pollen.

Its subcellular location is the secreted. The protein resides in the extracellular space. The protein localises to the extracellular matrix. It localises to the pollen coat. It is found in the cytoplasm. Its subcellular location is the nucleus. The protein resides in the mitochondrion. The protein localises to the endoplasmic reticulum. It localises to the golgi apparatus. It is found in the golgi stack. Its subcellular location is the vesicle. The protein resides in the vacuole. In Hesperocyparis arizonica (Arizona cypress), this protein is Pathogenesis-related 5 protein Cup a 3.